The primary structure comprises 173 residues: Sterile alpha motif domain-containing protein 5 (173 aa).

The region spanning 1-65 (MCTNIVYEWL…LEAVRRLREQ (65 aa)) is the SAM domain. A disordered region spans residues 75 to 119 (TLEPQPAPPGPPADAVPTGRRGEPCGGPAQGTRGDSRGHTTAPRS). A compositionally biased stretch (pro residues) spans 79 to 88 (QPAPPGPPAD).

As to quaternary structure, interacts promiscuously (via SAM domain) with EPHA5, EPHA6, EPHA7, EPHA8, EPHB1, EPHB2, EPHB3 and EPHB4 (via SAM domain) (in vitro). As to expression, detected in biliary epithelial cells on bile ducts at the hepatic hilum (at protein level).

The protein localises to the cytoplasm. The chain is Sterile alpha motif domain-containing protein 5 (SAMD5) from Homo sapiens (Human).